Reading from the N-terminus, the 426-residue chain is MDRSHPSLEPQAKGPCVIAPVRAVLRLRRRVCVLRKRRLLQPGTEPDSGTGTLGPTGSLGTLRADLDQPKFFTFDSLTELTSRTPRKRRRRSRVVLYPETSRKCRPRTERQSRAQRCLLLLVAIVGFQVLNAIENLDDNAQRYDLDGLEKALQRSVFGQPAAVGRIMALLRDYLATHVHSHPLLLALHGPSGVGKSHVGRLLARHFRAVLEDGALVLQYHARYHCPEPRPVQDCRKELAQRVADVVAQAEAEEKTPLLVLDEAELLPPALLDELHDLLQPQRSHHFHNAIYVLLSGAGGIEITHFVLQNASRMLPPLRHSAGSTQTEESPAQELLTSLRELLAREHPLWHTAAIVPFLLLDKPDVVNCFREEMAGEGFFPEQALAEHLAEQLSYYHVAGHEFAITGCKQVVAKVNLLQHKPAHAGH.

The segment at 41-60 (QPGTEPDSGTGTLGPTGSLG) is disordered. The span at 48 to 60 (SGTGTLGPTGSLG) shows a compositional bias: low complexity. 2 positions are modified to phosphoserine: S58 and S76. T84 is modified (phosphothreonine). A Phosphoserine modification is found at S101. A helical membrane pass occupies residues 117–133 (CLLLLVAIVGFQVLNAI). 189 to 196 (GPSGVGKS) contacts ATP.

Belongs to the ClpA/ClpB family. Torsin subfamily.

It localises to the membrane. The chain is Torsin-4A (Tor4a) from Mus musculus (Mouse).